The primary structure comprises 81 residues: Sulfur carrier protein TusA (81 aa).

Residue C19 is the Cysteine persulfide intermediate of the active site.

This sequence belongs to the sulfur carrier protein TusA family. As to quaternary structure, interacts with IscS.

The protein resides in the cytoplasm. Its pathway is tRNA modification. Sulfur carrier protein involved in sulfur trafficking in the cell. Part of a sulfur-relay system required for 2-thiolation during synthesis of 2-thiouridine of the modified wobble base 5-methylaminomethyl-2-thiouridine (mnm(5)s(2)U) in tRNA. Interacts with IscS and stimulates its cysteine desulfurase activity. Accepts an activated sulfur from IscS, which is then transferred to TusD, and thus determines the direction of sulfur flow from IscS to 2-thiouridine formation. Also appears to be involved in sulfur transfer for the biosynthesis of molybdopterin. The chain is Sulfur carrier protein TusA from Enterobacter sp. (strain 638).